Here is a 156-residue protein sequence, read N- to C-terminus: Small ribosomal subunit protein uS7 (156 aa).

It belongs to the universal ribosomal protein uS7 family. In terms of assembly, part of the 30S ribosomal subunit. Contacts proteins S9 and S11.

Functionally, one of the primary rRNA binding proteins, it binds directly to 16S rRNA where it nucleates assembly of the head domain of the 30S subunit. Is located at the subunit interface close to the decoding center, probably blocks exit of the E-site tRNA. This is Small ribosomal subunit protein uS7 from Bifidobacterium longum subsp. infantis (strain ATCC 15697 / DSM 20088 / JCM 1222 / NCTC 11817 / S12).